The sequence spans 86 residues: Cell division topological specificity factor (86 aa).

The protein belongs to the MinE family.

Functionally, prevents the cell division inhibition by proteins MinC and MinD at internal division sites while permitting inhibition at polar sites. This ensures cell division at the proper site by restricting the formation of a division septum at the midpoint of the long axis of the cell. The protein is Cell division topological specificity factor of Albidiferax ferrireducens (strain ATCC BAA-621 / DSM 15236 / T118) (Rhodoferax ferrireducens).